The following is a 942-amino-acid chain: Zinc finger protein 865 (942 aa).

The interval 66–106 is disordered; it reads FASTSTSKPKEFKVEAPPSSSLSPSKKPDIATTQQFNNQPP. The segment covering 96-106 has biased composition (polar residues); sequence ATTQQFNNQPP. 20 C2H2-type zinc fingers span residues 172 to 194, 200 to 222, 282 to 304, 310 to 332, 338 to 360, 367 to 389, 466 to 488, 494 to 516, 522 to 544, 564 to 586, 592 to 614, 678 to 700, 706 to 728, 734 to 756, 762 to 784, 790 to 812, 818 to 840, 846 to 868, 874 to 896, and 902 to 924; these read FPCTVCQKSFKQSSHLVQHMLVH, YECNTCGRTYNHISSLIRHRRCH, FTCTLCWKVFKKQSHLHQHQIIH, FSCSVCAKSFNRRESLKRHVKTH, VQCEVCGKSFRDTSYLLKHQATH, YKCELCGKSYAAPQSLLRHKQVH, FCCNVCGRGFGRRETLKRHERIH, HQCSVCGKRFRESFHLTKHHVVH, YKCELCGKVFGYPQSLTRHKQIH, FGCTDCGERFPDSFHLMNHKELH, YVCDTCGKCFGFIENLMWHKLVH, FSCSICGQSFKHFLGLVTHKYVH, LACNVCGQNFAGAYDLLLHRRTH, FTCSVCGKRFWEAALLMRHQRCH, YRCTICGRGFLHSWYLRQHKVVH, YKCALCNKRFAQSSSLAEHQRLH, QRCPTCGKTFRYRSNLLEHQRVH, YRCDQCGKSFFYISSILRHQRSH, LRCSCCLKLFKDPKYFSKHVQTH, and FKCGACGEAFSNTYGLKKHRHAH.

It belongs to the krueppel C2H2-type zinc-finger protein family.

It is found in the nucleus. Its function is as follows. May be involved in transcriptional regulation. The sequence is that of Zinc finger protein 865 (znf865) from Xenopus tropicalis (Western clawed frog).